The following is a 351-amino-acid chain: Biotin synthase (351 aa).

In terms of domain architecture, Radical SAM core spans 48-265 (NKVRIHILDN…LCMFRLINPD (218 aa)). [4Fe-4S] cluster contacts are provided by Cys63, Cys67, and Cys70. Cys107, Cys139, Cys199, and Arg269 together coordinate [2Fe-2S] cluster.

Belongs to the radical SAM superfamily. Biotin synthase family. In terms of assembly, homodimer. The cofactor is [4Fe-4S] cluster. [2Fe-2S] cluster is required as a cofactor.

The enzyme catalyses (4R,5S)-dethiobiotin + (sulfur carrier)-SH + 2 reduced [2Fe-2S]-[ferredoxin] + 2 S-adenosyl-L-methionine = (sulfur carrier)-H + biotin + 2 5'-deoxyadenosine + 2 L-methionine + 2 oxidized [2Fe-2S]-[ferredoxin]. It participates in cofactor biosynthesis; biotin biosynthesis; biotin from 7,8-diaminononanoate: step 2/2. Functionally, catalyzes the conversion of dethiobiotin (DTB) to biotin by the insertion of a sulfur atom into dethiobiotin via a radical-based mechanism. The polypeptide is Biotin synthase (Leptospira interrogans serogroup Icterohaemorrhagiae serovar Lai (strain 56601)).